Reading from the N-terminus, the 766-residue chain is FYVE, RhoGEF and PH domain-containing protein 4 (766 aa).

Disordered regions lie at residues 1 to 20 (MEEI…PSKV), 46 to 83 (NLNA…DKTQ), and 134 to 188 (ETAT…ESPL). Residues 1–150 (MEEIKPASAS…SPTTDSCDGN (150 aa)) are actin filament-binding. Polar residues-rich tracts occupy residues 58–83 (LTTT…DKTQ) and 145–157 (DSCD…SSYR). Residues 167–184 (LEERGAETETKVQERENG) are compositionally biased toward basic and acidic residues. Positions 206–393 (KLHKIANELL…STAASHSNSA (188 aa)) constitute a DH domain. Residues 422–521 (ELIKEGQILK…WIKALQETID (100 aa)) form the PH 1 domain. The FYVE-type zinc finger occupies 559–619 (DNEVTMCMKC…VCKDCYQIIS (61 aa)). Zn(2+) is bound by residues Cys565, Cys568, Cys582, Cys585, Cys590, Cys593, Cys611, and Cys614. The region spanning 643–740 (NSVVCSFLQY…WLKVILLAVT (98 aa)) is the PH 2 domain. Phosphoserine is present on residues Ser702 and Ser716. Residues 742–766 (ETPGGPNEHPATLDDHPEPKKKSEC) are disordered. Residues 752–766 (ATLDDHPEPKKKSEC) show a composition bias toward basic and acidic residues.

In terms of assembly, homooligomer. Expressed in different tissues, including brain, cerebellum, peripheral nerve, skeletal muscle, heart, uterus, placenta and testis.

The protein localises to the cytoplasm. It localises to the cytoskeleton. Its subcellular location is the cell projection. The protein resides in the filopodium. Its function is as follows. Activates CDC42, a member of the Ras-like family of Rho- and Rac proteins, by exchanging bound GDP for free GTP. Plays a role in regulating the actin cytoskeleton and cell shape. Activates MAPK8. In Homo sapiens (Human), this protein is FYVE, RhoGEF and PH domain-containing protein 4 (FGD4).